A 135-amino-acid polypeptide reads, in one-letter code: NAD(P)H-quinone oxidoreductase subunit 3 (135 aa).

3 consecutive transmembrane segments (helical) span residues 15–35 (IVFF…SSLV), 79–99 (MFAL…PWAV), and 104–124 (LGLL…VALV).

This sequence belongs to the complex I subunit 3 family. As to quaternary structure, NDH-1 can be composed of about 15 different subunits; different subcomplexes with different compositions have been identified which probably have different functions.

It is found in the cellular thylakoid membrane. It carries out the reaction a plastoquinone + NADH + (n+1) H(+)(in) = a plastoquinol + NAD(+) + n H(+)(out). It catalyses the reaction a plastoquinone + NADPH + (n+1) H(+)(in) = a plastoquinol + NADP(+) + n H(+)(out). Its function is as follows. NDH-1 shuttles electrons from an unknown electron donor, via FMN and iron-sulfur (Fe-S) centers, to quinones in the respiratory and/or the photosynthetic chain. The immediate electron acceptor for the enzyme in this species is believed to be plastoquinone. Couples the redox reaction to proton translocation, and thus conserves the redox energy in a proton gradient. Cyanobacterial NDH-1 also plays a role in inorganic carbon-concentration. The sequence is that of NAD(P)H-quinone oxidoreductase subunit 3 from Trichodesmium erythraeum (strain IMS101).